The sequence spans 304 residues: D-alanine--D-alanine ligase (304 aa).

The ATP-grasp domain maps to 103 to 299 (KLIWQALGLP…FADLCIEILK (197 aa)). ATP is bound at residue 129–184 (EEKLGLPMFVKPAAEGSSVGVVKVKGKGRLKSVYEELKHLQGEIIAERFIGGGEYS). Mg(2+)-binding residues include Asp253, Glu266, and Asn268.

This sequence belongs to the D-alanine--D-alanine ligase family. Requires Mg(2+) as cofactor. Mn(2+) is required as a cofactor.

Its subcellular location is the cytoplasm. The catalysed reaction is 2 D-alanine + ATP = D-alanyl-D-alanine + ADP + phosphate + H(+). Its pathway is cell wall biogenesis; peptidoglycan biosynthesis. Its function is as follows. Cell wall formation. In Neisseria meningitidis serogroup B (strain ATCC BAA-335 / MC58), this protein is D-alanine--D-alanine ligase.